We begin with the raw amino-acid sequence, 125 residues long: Phosphoribosyl-AMP cyclohydrolase (125 aa).

Residue aspartate 74 participates in Mg(2+) binding. Cysteine 75 contacts Zn(2+). The Mg(2+) site is built by aspartate 76 and aspartate 78. Zn(2+) is bound by residues cysteine 92 and cysteine 99.

Belongs to the PRA-CH family. In terms of assembly, homodimer. Mg(2+) serves as cofactor. The cofactor is Zn(2+).

Its subcellular location is the cytoplasm. The enzyme catalyses 1-(5-phospho-beta-D-ribosyl)-5'-AMP + H2O = 1-(5-phospho-beta-D-ribosyl)-5-[(5-phospho-beta-D-ribosylamino)methylideneamino]imidazole-4-carboxamide. Its pathway is amino-acid biosynthesis; L-histidine biosynthesis; L-histidine from 5-phospho-alpha-D-ribose 1-diphosphate: step 3/9. Functionally, catalyzes the hydrolysis of the adenine ring of phosphoribosyl-AMP. This is Phosphoribosyl-AMP cyclohydrolase from Desulforapulum autotrophicum (strain ATCC 43914 / DSM 3382 / VKM B-1955 / HRM2) (Desulfobacterium autotrophicum).